Consider the following 1961-residue polypeptide: Myosin-9 (1961 aa).

Alanine 2 carries the post-translational modification N-acetylalanine. Positions 2–838 (AQQAADKYLY…RLFTKVKPLL (837 aa)) are mediates interaction with LIMCH1. At lysine 8 the chain carries N6-acetyllysine. A Phosphotyrosine modification is found at tyrosine 11. A Myosin N-terminal SH3-like domain is found at 27–77 (GAKKLVWVPSTKNGFEPASLKEEVGEEAIVELVENGKKVKVNKDDIQKMNP). The region spanning 81–776 (SKVEDMAELT…VLAHLEEERD (696 aa)) is the Myosin motor domain. Lysine 102 is modified (N6-acetyllysine). 174 to 181 (GESGAGKT) provides a ligand contact to ATP. An N6-acetyllysine mark is found at lysine 299, lysine 435, and lysine 613. Serine 628 carries the post-translational modification Phosphoserine. The tract at residues 654–676 (LAKLMATLRNTNPNFVCCIIPNH) is actin-binding. Tyrosine 754 is modified (phosphotyrosine). The IQ domain occupies 779–808 (ITDVIIGFQACCRGYLARKAFAKRQQQLTA). Positions 841 to 1927 (IRHEDELLAK…LKNKLRRGDM (1087 aa)) form a coiled coil. The residue at position 850 (lysine 850) is an N6-succinyllysine. Lysine 860, lysine 975, and lysine 1024 each carry N6-acetyllysine. Residues 1035–1055 (RLRREEKQRQELEKTRRKLEG) show a composition bias toward basic and acidic residues. Positions 1035 to 1057 (RLRREEKQRQELEKTRRKLEGDS) are disordered. Phosphoserine is present on serine 1114. N6-acetyllysine occurs at positions 1234 and 1249. A disordered region spans residues 1331-1353 (LKQMEDEKNSFREQLEEEEEEAK). Residues 1332-1344 (KQMEDEKNSFREQ) show a composition bias toward basic and acidic residues. N6-acetyllysine is present on residues lysine 1358, lysine 1393, lysine 1405, lysine 1411, lysine 1460, and lysine 1639. Lysine 1670 bears the N6-succinyllysine mark. Serine 1715 is modified (phosphoserine). N6-acetyllysine occurs at positions 1794, 1803, and 1846. Residues 1878-1910 (RQLEEAEEEAQRANASRRKLQRELEDATETADA) form a disordered region. Residue arginine 1924 is modified to Omega-N-methylarginine. The interval 1938-1961 (KGTGDCSDEEVDGKADGADAKATE) is disordered. Serine 1944 is subject to Phosphoserine. Over residues 1949–1961 (DGKADGADAKATE) the composition is skewed to basic and acidic residues.

Belongs to the TRAFAC class myosin-kinesin ATPase superfamily. Myosin family. In terms of assembly, myosin is a hexameric protein that consists of 2 heavy chain subunits (MHC), 2 alkali light chain subunits (MLC) and 2 regulatory light chain subunits (MLC-2). Interacts with RASIP1. Interacts with DDR1. Interacts with PDLIM2. Interacts with SVIL. Interacts with HTRA3. Interacts with Myo7a. Interacts with CFAP95. Interacts with LIMCH1; independently of the integration of MYH9 into the myosin complex. Interacts with RAB3A. Interacts with ZBED4. Interacts with S100A4; this interaction increases cell motility. ISGylated. In terms of processing, ubiquitination.

It localises to the cytoplasm. Its subcellular location is the cytoskeleton. The protein localises to the cell cortex. It is found in the cytoplasmic vesicle. The protein resides in the secretory vesicle. It localises to the cortical granule. Functionally, cellular myosin that appears to play a role in cytokinesis, cell shape, and specialized functions such as secretion and capping. Required for cortical actin clearance prior to oocyte exocytosis. Promotes cell motility in conjunction with S100A4. During cell spreading, plays an important role in cytoskeleton reorganization, focal contact formation (in the margins but not the central part of spreading cells), and lamellipodial retraction; this function is mechanically antagonized by MYH10. This chain is Myosin-9 (Myh9), found in Rattus norvegicus (Rat).